Consider the following 102-residue polypeptide: Large ribosomal subunit protein bL21 (102 aa).

Belongs to the bacterial ribosomal protein bL21 family. Part of the 50S ribosomal subunit. Contacts protein L20.

This protein binds to 23S rRNA in the presence of protein L20. The polypeptide is Large ribosomal subunit protein bL21 (Listeria monocytogenes serotype 4b (strain F2365)).